Consider the following 280-residue polypeptide: Dermonecrotic toxin LsSicTox-alphaIA1 (280 aa).

Residue histidine 12 is part of the active site. Positions 32 and 34 each coordinate Mg(2+). The active-site Nucleophile is histidine 48. 2 cysteine pairs are disulfide-bonded: cysteine 52–cysteine 58 and cysteine 54–cysteine 197. A Mg(2+)-binding site is contributed by aspartate 92.

It belongs to the arthropod phospholipase D family. Class II subfamily. The cofactor is Mg(2+). As to expression, expressed by the venom gland.

Its subcellular location is the secreted. It catalyses the reaction an N-(acyl)-sphingosylphosphocholine = an N-(acyl)-sphingosyl-1,3-cyclic phosphate + choline. The catalysed reaction is an N-(acyl)-sphingosylphosphoethanolamine = an N-(acyl)-sphingosyl-1,3-cyclic phosphate + ethanolamine. It carries out the reaction a 1-acyl-sn-glycero-3-phosphocholine = a 1-acyl-sn-glycero-2,3-cyclic phosphate + choline. The enzyme catalyses a 1-acyl-sn-glycero-3-phosphoethanolamine = a 1-acyl-sn-glycero-2,3-cyclic phosphate + ethanolamine. Functionally, dermonecrotic toxins cleave the phosphodiester linkage between the phosphate and headgroup of certain phospholipids (sphingolipid and lysolipid substrates), forming an alcohol (often choline) and a cyclic phosphate. This toxin acts on sphingomyelin (SM). It may also act on ceramide phosphoethanolamine (CPE), lysophosphatidylcholine (LPC) and lysophosphatidylethanolamine (LPE), but not on lysophosphatidylserine (LPS), and lysophosphatidylglycerol (LPG). It acts by transphosphatidylation, releasing exclusively cyclic phosphate products as second products. Induces dermonecrosis, hemolysis, increased vascular permeability, edema, inflammatory response, and platelet aggregation. The chain is Dermonecrotic toxin LsSicTox-alphaIA1 from Loxosceles similis (Brazilian brown spider).